A 264-amino-acid polypeptide reads, in one-letter code: 3-methyl-2-oxobutanoate hydroxymethyltransferase (264 aa).

Positions 45 and 84 each coordinate Mg(2+). 3-methyl-2-oxobutanoate is bound by residues 45 to 46 (DS), Asp84, and Lys112. A Mg(2+)-binding site is contributed by Glu114. The Proton acceptor role is filled by Glu181.

The protein belongs to the PanB family. As to quaternary structure, homodecamer; pentamer of dimers. The cofactor is Mg(2+).

The protein localises to the cytoplasm. It catalyses the reaction 3-methyl-2-oxobutanoate + (6R)-5,10-methylene-5,6,7,8-tetrahydrofolate + H2O = 2-dehydropantoate + (6S)-5,6,7,8-tetrahydrofolate. It participates in cofactor biosynthesis; (R)-pantothenate biosynthesis; (R)-pantoate from 3-methyl-2-oxobutanoate: step 1/2. Catalyzes the reversible reaction in which hydroxymethyl group from 5,10-methylenetetrahydrofolate is transferred onto alpha-ketoisovalerate to form ketopantoate. The protein is 3-methyl-2-oxobutanoate hydroxymethyltransferase of Shewanella oneidensis (strain ATCC 700550 / JCM 31522 / CIP 106686 / LMG 19005 / NCIMB 14063 / MR-1).